A 1032-amino-acid polypeptide reads, in one-letter code: tRNA wybutosine-synthesizing protein 4 (1032 aa).

S-adenosyl-L-methionine is bound by residues Arg-69, Gly-95, Asp-122, 169–170 (DL), and Glu-196. Positions 702 to 726 (ESVEPNKSQSEKATSKPSAQSQNEP) are disordered. Residues 716–725 (SKPSAQSQNE) show a composition bias toward polar residues. One can recognise a JmjC domain in the interval 833–988 (PTKLPANLAV…AAGRDVYGNR (156 aa)).

This sequence belongs to the methyltransferase superfamily. LCMT family.

The catalysed reaction is 7-[(3S)-3-amino-3-carboxypropyl]wyosine(37) in tRNA(Phe) + S-adenosyl-L-methionine = 7-[(3S)-(3-amino-3-methoxycarbonyl)propyl]wyosine(37) in tRNA(Phe) + S-adenosyl-L-homocysteine. It catalyses the reaction 7-[(3S)-(3-amino-3-methoxycarbonyl)propyl]wyosine(37) in tRNA(Phe) + S-adenosyl-L-methionine + CO2 = wybutosine(37) in tRNA(Phe) + S-adenosyl-L-homocysteine + 2 H(+). Its pathway is tRNA modification; wybutosine-tRNA(Phe) biosynthesis. Functionally, probable S-adenosyl-L-methionine-dependent methyltransferase that acts as a component of the wybutosine biosynthesis pathway. Wybutosine is a hyper modified guanosine with a tricyclic base found at the 3'-position adjacent to the anticodon of eukaryotic phenylalanine tRNA. May methylate the carboxyl group of leucine residues to form alpha-leucine ester residues. The chain is tRNA wybutosine-synthesizing protein 4 (ppm2) from Aspergillus oryzae (strain ATCC 42149 / RIB 40) (Yellow koji mold).